The primary structure comprises 89 residues: Small ribosomal subunit protein uS15 (89 aa).

It belongs to the universal ribosomal protein uS15 family. Part of the 30S ribosomal subunit. Forms a bridge to the 50S subunit in the 70S ribosome, contacting the 23S rRNA.

Functionally, one of the primary rRNA binding proteins, it binds directly to 16S rRNA where it helps nucleate assembly of the platform of the 30S subunit by binding and bridging several RNA helices of the 16S rRNA. In terms of biological role, forms an intersubunit bridge (bridge B4) with the 23S rRNA of the 50S subunit in the ribosome. The protein is Small ribosomal subunit protein uS15 of Staphylococcus carnosus (strain TM300).